The sequence spans 331 residues: 6-phosphogluconolactonase (331 aa).

Belongs to the cycloisomerase 2 family.

It catalyses the reaction 6-phospho-D-glucono-1,5-lactone + H2O = 6-phospho-D-gluconate + H(+). The protein operates within carbohydrate degradation; pentose phosphate pathway; D-ribulose 5-phosphate from D-glucose 6-phosphate (oxidative stage): step 2/3. Catalyzes the hydrolysis of 6-phosphogluconolactone to 6-phosphogluconate. This is 6-phosphogluconolactonase from Salmonella arizonae (strain ATCC BAA-731 / CDC346-86 / RSK2980).